The sequence spans 2200 residues: MGSLSSARESAQRITFFGDQTVDTLLCIKDLANRSHQLPILRRYLREAADKLQLLLSQIELGDYECYRNFETIVELAEIYSKQDGTYEPIGCALWTISQFADYLSRSETDPSILTLSDSAAQPTYVVGVCGGLLLGAAAATARDINELLDIGRKLVDVSFNLGVAQWKRAMDIEGKPGRWAVAIVNVPPKQIRNIITAFNEDMAIPKHRQFYISFLAKGWAAISGPPSIFPELWEYSSTLSSASKMDLPLGTPAHAAHLRSLNIEELIGSGSVLDLPVRQDRLVISTSTCKPFESQTFGSLLSSSLHDITGETLHIAGVNDYVASCLSRETLVQVSSFGPTSQIGSFKKALEDSGLKVDLDLSVPESKTPNLLKNPDARDGSNMIAIVGQSVRLPGSDDVKTFWENLKAGQTFESEIPPSRFDLQNYYDTTGAKKSSVTTRFGHFLDRPGLFDCRLFNVSPREAKQMDPIQRLLLMCSYEALQTAGYSPDSSLSTNRMRVATYFGQSGDDWRQGRASQDVDIYYIPGTIRSFAPGKLNYHYKWGGGNYSVDSACAASTTSVIMACNALLGRECDMALAGGGQLHLEPENYAGLSRAGFLSKTTGGCKTFREDADGYCRGEGIGVVVLKRLEDALADNDNVLAVVRGADRNYSWDASSITHPSANAQATVIQRVLRNTGVEPADIGFVEMHGTGTTAGDSVEMKTVTTVFGSRPKDNPLYIGAVKANFGHGEAAAGITSLLKAVQMLGQKTIPRQPGFPGPKDPTFDHLDAMNIRIPDSSFPFPTPTRPFSQDGKMRILVNNFDASGGNNCVLLEEAPDKNVSQIQDPRQYYTVAISARTTKSLQKNMERLSDYLVKHPDTPVADVAYTSTARRIHEDLKRSYTVDSTESLVGLLQADLKKDLTGIRPATPRSVVFAFTGQGSQYSGMTKQLFETCTPFRESVQSLHDLAVWQDFPSFLNLFTDDVTDEISASPIQTQLAIVVLEMSLANLWKSWGVEPDLVIGYSLGEYVALYVSGVLSAHDVLFLVGNRAQLMDERCEIGSYSMLAVQASPEDLEEPLKAYPTSNVACRGAPRSTVVSGPSEDIAKLHAELKEKSISGTILNVPYGFHCAQVDPILEDFRDLLDRVPFSKPRIPVASSLDGVIVTDDDVFSPSYMVRQTREPVAFVSALKAIETSHLVDNTSLWVEIGPKRVLNSFIKATLAVDHDRLLHSVDEKASNWRTIATAITACWQGGVSIKWQNFHRQFTKHLRLVDLPTYAFDLKDYWIEPAAPIVQQRSAAEPLRQVAVPAVPGFPTASLQRVREERIQGDNAAVTFESTLSHPDLMGLIRGHQVNGVDLFPASGWWDMAYTAAKYIHHRIQPSRGAAPGLSMLDCSITHPLMPSASEDQQKLVIIVAKKQAGSSVVEVSFKSQEKSVEQDHGSCKIRFESKADWEAEWSRSAHFIKAAKNNVVTNATRPDGNGHKLPKPVVYTLFSNFVNYSGDFKGIQQVYLNADFQREVVADVVLPAGMYNFNLNPYWSDALIHACGFMLHSDPDLPTQDCFLFNGFEELRFLMDDLLPGVPYTSYVFMHDTNSQEVPAKRTRNVTGDIYIFQGEKIVGTVQGVVFQRLTKRILTTILGKSQDHHNSNEVRNGNATTTHTNPPAHATTQSFFAPPGIKPAVAFSSAPATVGEETAEAVIAKILTKTGANRASLSESTTLGEIGLDSLEWIELVGVFRSALDIEVPASFFFEYPKVLRLRQAIAELPLEGEKEESGSSSPDSPYGMLTPATGRFTPITASRSTHNSDGPANYANIVLDIVLSQTGFDKDDVLPSTRFDDMGLDSLCTMEVVSLVREQTGLDLPASFFHHHPTVADVRKNLGPNTEDKSKDSVKASASIAVSEPATELVVVHHPGNSPAPESLPIIDEDLKDYHCDFFLMQGSSDSAEIPMFFLPDGTGYPAVLLKLPPVFKGDNPLFTCKSPLLHRAEGREVACTIEGLALSYAEAIRRTRPHGPYLLAGYSLGAAYAYEVAKILADAGEIVQGLLFVDFNMAASVGLEHRERKPVPTNLNVGVMEQVGWMNGIHNDEKNFHIPPAPPKIKFHALSVFKSLTRYFPKPMTPSQRPRNTYALWAGAGMEDLLGPSNAGFLPEFGIIDWQMGSRRENNGPAGWENFIGGPVRCATVPCDHLSIMMSTDWVGTTANIIKDLLEDALSNPGTP.

A Starter acyltransferase (SAT) domain is found at phenylalanine 16–histidine 255. One can recognise a Ketosynthase family 3 (KS3) domain in the interval serine 382–glutamate 815. Residues cysteine 554, histidine 690, and histidine 729 each act as for beta-ketoacyl synthase activity in the active site. Positions valine 914–leucine 1202 constitute a Malonyl-CoA:ACP transacylase (MAT) domain. Positions threonine 1296–glycine 1621 are product template (PT) domain. An N-terminal hotdog fold region spans residues glutamine 1300–aspartate 1433. The PKS/mFAS DH domain occupies glutamine 1300–threonine 1617. Histidine 1332 functions as the Proton acceptor; for dehydratase activity in the catalytic mechanism. The tract at residues asparagine 1462–threonine 1617 is C-terminal hotdog fold. Aspartate 1522 serves as the catalytic Proton donor; for dehydratase activity. Residues aspartate 1625–serine 1652 are disordered. Over residues asparagine 1636–threonine 1650 the composition is skewed to low complexity. Carrier domains are found at residues threonine 1671–proline 1748 and alanine 1791–threonine 1865. O-(pantetheine 4'-phosphoryl)serine occurs at positions 1708 and 1825. Residues methionine 1931–methionine 2173 form a thioesterase (TE) domain region.

Pantetheine 4'-phosphate serves as cofactor.

Its pathway is secondary metabolite biosynthesis. In terms of biological role, non-reducing polyketide synthase; part of the gene cluster that mediates the biosynthesis of polyesters containing 2,4-dihydroxy-6-(2-hydroxypropyl)benzoate and 3-hydroxybutyrate moieties, such as talapolyester G, 15G256beta and 15G256beta-2; as well as to oxidized derivatives such as 15G256alpha. The biosynthesis of the polyesters probably starts with the formation of the diketide 3-hydroxybutyryl-S-ACP catalyzed by the partially reducing polyketide synthase tpeA. The acceptance of 3-hydroxybutyryl by the non-reducing polyketide synthase tpeB would initiate further elongation and cyclization, catalyzed by KS and PT, respectively, to form 2,4-dihydroxy-6-(2-hydroxyn-propyl)benzoyl-S-ACP intermediate. The TE domain could catalyze lactonization at this step to yield 6-hydroxymellein as a derailment product. The polyesterification process maybe occurs when additional molecules of 3-hydroxybutyryl are transferred to tpeB. Following the first esterification step, an intramolecular cyclization catalyzed by the TE domain of tpeB would give talarodioxadione 1, whereas the ethyl esterification of talapolyester G perhaps happens spontaneously. Further oxidation by the cytochrome P450 monooxygenase tpeC then leads to the formation of oxidized derivatives. This chain is Non-reducing polyketide synthase tpeB, found in Talaromyces stipitatus (strain ATCC 10500 / CBS 375.48 / QM 6759 / NRRL 1006) (Penicillium stipitatum).